The chain runs to 538 residues: Cytochrome P450 18a1 (538 aa).

A helical membrane pass occupies residues 24-44; that stretch reads QHLLMVFLGLLALVTLLQWLV. Cysteine 466 lines the heme pocket.

It belongs to the cytochrome P450 family. It depends on heme as a cofactor. Expressed in body wall (epidermal and muscle cells) and mid- and hind-gut.

It localises to the endoplasmic reticulum membrane. The protein localises to the microsome membrane. In terms of biological role, probably involved in steroid hormones biosynthesis. This is Cytochrome P450 18a1 (Cyp18a1) from Drosophila melanogaster (Fruit fly).